The following is a 502-amino-acid chain: ATP synthase subunit alpha (502 aa).

169–176 is a binding site for ATP; it reads GDRQTGKT.

Belongs to the ATPase alpha/beta chains family. In terms of assembly, F-type ATPases have 2 components, CF(1) - the catalytic core - and CF(0) - the membrane proton channel. CF(1) has five subunits: alpha(3), beta(3), gamma(1), delta(1), epsilon(1). CF(0) has three main subunits: a(1), b(2) and c(9-12). The alpha and beta chains form an alternating ring which encloses part of the gamma chain. CF(1) is attached to CF(0) by a central stalk formed by the gamma and epsilon chains, while a peripheral stalk is formed by the delta and b chains.

The protein resides in the cell membrane. It carries out the reaction ATP + H2O + 4 H(+)(in) = ADP + phosphate + 5 H(+)(out). Produces ATP from ADP in the presence of a proton gradient across the membrane. The alpha chain is a regulatory subunit. This chain is ATP synthase subunit alpha, found in Staphylococcus aureus (strain COL).